A 664-amino-acid chain; its full sequence is Glycine--tRNA ligase beta subunit (664 aa).

It belongs to the class-II aminoacyl-tRNA synthetase family. In terms of assembly, tetramer of two alpha and two beta subunits.

The protein localises to the cytoplasm. It catalyses the reaction tRNA(Gly) + glycine + ATP = glycyl-tRNA(Gly) + AMP + diphosphate. This chain is Glycine--tRNA ligase beta subunit, found in Rickettsia peacockii (strain Rustic).